The following is a 203-amino-acid chain: Peptidyl-tRNA hydrolase (203 aa).

Position 14 (tyrosine 14) interacts with tRNA. Histidine 19 serves as the catalytic Proton acceptor. TRNA-binding residues include tyrosine 64, asparagine 66, and asparagine 112.

The protein belongs to the PTH family. In terms of assembly, monomer.

It localises to the cytoplasm. The enzyme catalyses an N-acyl-L-alpha-aminoacyl-tRNA + H2O = an N-acyl-L-amino acid + a tRNA + H(+). Hydrolyzes ribosome-free peptidyl-tRNAs (with 1 or more amino acids incorporated), which drop off the ribosome during protein synthesis, or as a result of ribosome stalling. Its function is as follows. Catalyzes the release of premature peptidyl moieties from peptidyl-tRNA molecules trapped in stalled 50S ribosomal subunits, and thus maintains levels of free tRNAs and 50S ribosomes. In Methylobacterium nodulans (strain LMG 21967 / CNCM I-2342 / ORS 2060), this protein is Peptidyl-tRNA hydrolase.